Here is a 355-residue protein sequence, read N- to C-terminus: Phosphoribosylformylglycinamidine cyclo-ligase (355 aa).

It belongs to the AIR synthase family.

The protein localises to the cytoplasm. It catalyses the reaction 2-formamido-N(1)-(5-O-phospho-beta-D-ribosyl)acetamidine + ATP = 5-amino-1-(5-phospho-beta-D-ribosyl)imidazole + ADP + phosphate + H(+). The protein operates within purine metabolism; IMP biosynthesis via de novo pathway; 5-amino-1-(5-phospho-D-ribosyl)imidazole from N(2)-formyl-N(1)-(5-phospho-D-ribosyl)glycinamide: step 2/2. The polypeptide is Phosphoribosylformylglycinamidine cyclo-ligase (Methylobacterium sp. (strain 4-46)).